We begin with the raw amino-acid sequence, 383 residues long: Acetylornithine deacetylase (383 aa).

Residue histidine 80 coordinates Zn(2+). Aspartate 82 is an active-site residue. Residue aspartate 112 coordinates Zn(2+). Glutamate 144 is an active-site residue. Positions 145, 169, and 355 each coordinate Zn(2+).

The protein belongs to the peptidase M20A family. ArgE subfamily. In terms of assembly, homodimer. The cofactor is Zn(2+). Co(2+) is required as a cofactor. It depends on glutathione as a cofactor.

It is found in the cytoplasm. It catalyses the reaction N(2)-acetyl-L-ornithine + H2O = L-ornithine + acetate. It participates in amino-acid biosynthesis; L-arginine biosynthesis; L-ornithine from N(2)-acetyl-L-ornithine (linear): step 1/1. Its function is as follows. Catalyzes the hydrolysis of the amide bond of N(2)-acetylated L-amino acids. Cleaves the acetyl group from N-acetyl-L-ornithine to form L-ornithine, an intermediate in L-arginine biosynthesis pathway, and a branchpoint in the synthesis of polyamines. This chain is Acetylornithine deacetylase, found in Salmonella choleraesuis (strain SC-B67).